A 235-amino-acid polypeptide reads, in one-letter code: Phosphoribosylaminoimidazole-succinocarboxamide synthase (235 aa).

It belongs to the SAICAR synthetase family.

The catalysed reaction is 5-amino-1-(5-phospho-D-ribosyl)imidazole-4-carboxylate + L-aspartate + ATP = (2S)-2-[5-amino-1-(5-phospho-beta-D-ribosyl)imidazole-4-carboxamido]succinate + ADP + phosphate + 2 H(+). It participates in purine metabolism; IMP biosynthesis via de novo pathway; 5-amino-1-(5-phospho-D-ribosyl)imidazole-4-carboxamide from 5-amino-1-(5-phospho-D-ribosyl)imidazole-4-carboxylate: step 1/2. The protein is Phosphoribosylaminoimidazole-succinocarboxamide synthase of Streptococcus sanguinis (strain SK36).